Consider the following 459-residue polypeptide: tRNA modification GTPase MnmE (459 aa).

Residues arginine 23, glutamate 86, and arginine 125 each contribute to the (6S)-5-formyl-5,6,7,8-tetrahydrofolate site. The 160-residue stretch at 221-380 folds into the TrmE-type G domain; it reads GIDAVIIGKP…LENAITELFV (160 aa). Position 231 (asparagine 231) interacts with K(+). GTP-binding positions include 231 to 236, 250 to 256, and 275 to 278; these read NVGKSS, TDIPGTT, and DTAG. Serine 235 lines the Mg(2+) pocket. K(+) contacts are provided by threonine 250, isoleucine 252, and threonine 255. Threonine 256 is a Mg(2+) binding site. Lysine 459 is a binding site for (6S)-5-formyl-5,6,7,8-tetrahydrofolate.

This sequence belongs to the TRAFAC class TrmE-Era-EngA-EngB-Septin-like GTPase superfamily. TrmE GTPase family. In terms of assembly, homodimer. Heterotetramer of two MnmE and two MnmG subunits. It depends on K(+) as a cofactor.

It is found in the cytoplasm. Functionally, exhibits a very high intrinsic GTPase hydrolysis rate. Involved in the addition of a carboxymethylaminomethyl (cmnm) group at the wobble position (U34) of certain tRNAs, forming tRNA-cmnm(5)s(2)U34. This Acetivibrio thermocellus (strain ATCC 27405 / DSM 1237 / JCM 9322 / NBRC 103400 / NCIMB 10682 / NRRL B-4536 / VPI 7372) (Clostridium thermocellum) protein is tRNA modification GTPase MnmE.